The chain runs to 156 residues: MTTFNAKPDFSLFLQALSWEIDDQAGIEVRNDLLREVGRGMAGRLQPPLCNTIHQLQIELNALLGMINWGYVKLELLAEEQAMRIVHEDLPQVGSAGEPSGTWLAPVLEGLYGRWITSQPGAFGDYVVTRDVDAEDLNSVPTQTIILYMRTRSNSN.

The protein operates within glycan metabolism; bacterial cellulose biosynthesis. Functionally, may have a major role in the perfection of crystallization, involved either in the pore structure itself or in the organization of the pores within the linear array of terminal synthesizing complexes (TCs). In Komagataeibacter xylinus (Gluconacetobacter xylinus), this protein is Cellulose synthase operon protein D (bcsDI).